The primary structure comprises 570 residues: Probable metalloreductase AIM14 (570 aa).

Helical transmembrane passes span 21-41 (IKYGYYVLIISLVYLIGLALL), 70-90 (AIHLGILFFAVLIPFYYHYSL), 101-118 (LGRLSYALIPLNLFLTLR), 142-162 (IITVIGLLHGIFFIIKWAIDD), 177-197 (FVGFIISILVLFLLICSIGPM), 204-224 (LFYIVHNLVNVAFILLTPIHS), and 230-250 (FPFLLLNCTLLFIHIINRIVF). One can recognise a Ferric oxidoreductase domain in the interval 101–219 (LGRLSYALIP…NLVNVAFILL (119 aa)). The 139-residue stretch at 250–388 (FAKSLMILNK…GGSGISFALP (139 aa)) folds into the FAD-binding FR-type domain. The segment covering 481–505 (SNFNSENADSNDNTPETSHSPTKEN) has biased composition (polar residues). The tract at residues 481 to 507 (SNFNSENADSNDNTPETSHSPTKENGS) is disordered.

The protein belongs to the ferric reductase (FRE) family. AIM14 subfamily. In terms of assembly, interacts with ribosomes.

Its subcellular location is the membrane. Probable cell surface metalloreductase. May be involved in iron or copper homeostasis. The protein is Probable metalloreductase AIM14 (AIM14) of Saccharomyces cerevisiae (strain YJM789) (Baker's yeast).